A 445-amino-acid chain; its full sequence is Type II methyltransferase M.Bpa9945I (445 aa).

The 444-residue stretch at 1–444 folds into the SAM-dependent MTase C5-type domain; that stretch reads MIVIDLFSGA…RAVKDVINGH (444 aa). Residue Cys-136 is part of the active site.

Belongs to the class I-like SAM-binding methyltransferase superfamily. C5-methyltransferase family.

The protein localises to the cytoplasm. It catalyses the reaction a 2'-deoxycytidine in DNA + S-adenosyl-L-methionine = a 5-methyl-2'-deoxycytidine in DNA + S-adenosyl-L-homocysteine + H(+). In terms of biological role, component of antiviral defense system DISARM (defense island system associated with restriction-modification), composed of DrmE, DrmA, DrmB, DrmC and DrmMII. DISARM is probably a multi-gene restriction module, this subunit is a DNA methylase. Expression of DISARM in B.subtilis (strain BEST7003) confers resistance to phages Nf, phi29, phi105, phi3T, SPO1, SPR and SPP1. Protection is over 10(7)-fold against phi3T, 10(4)-10(5)-fold against Nf, phi29, phi105 and SPR, 100-fold against SPO1 and 10-fold against SPP1. DISARM does not interfere with phage adsorption, but instead interferes with (phi3T) DNA replication early in its cycle, preventing replication, circularization and lysogeny and probably causes phage DNA degradation (DNA is degraded in SPP1-infected cells). Expression of this methylase alone leads to highly methylated phage, however they are still susceptible to the DISARM system. Its function is as follows. A methylase, recognizes the double-stranded sequence 5'-CCWGG-3', methylates C-2 on both strands. Phage Nf does not have any 5'-CCWGG-3' motifs but is still targeted by the DISARM system. This chain is Type II methyltransferase M.Bpa9945I, found in Bacillus paralicheniformis (strain ATCC 9945a / NCIMB 11709 / CD-2).